The primary structure comprises 303 residues: ATP phosphoribosyltransferase (303 aa).

The protein belongs to the ATP phosphoribosyltransferase family. Long subfamily. It depends on Mg(2+) as a cofactor.

The protein localises to the cytoplasm. It carries out the reaction 1-(5-phospho-beta-D-ribosyl)-ATP + diphosphate = 5-phospho-alpha-D-ribose 1-diphosphate + ATP. It functions in the pathway amino-acid biosynthesis; L-histidine biosynthesis; L-histidine from 5-phospho-alpha-D-ribose 1-diphosphate: step 1/9. With respect to regulation, feedback inhibited by histidine. Its function is as follows. Catalyzes the condensation of ATP and 5-phosphoribose 1-diphosphate to form N'-(5'-phosphoribosyl)-ATP (PR-ATP). Has a crucial role in the pathway because the rate of histidine biosynthesis seems to be controlled primarily by regulation of HisG enzymatic activity. The polypeptide is ATP phosphoribosyltransferase (Haemophilus influenzae (strain PittEE)).